Reading from the N-terminus, the 42-residue chain is Photosystem I reaction center subunit IX (42 aa).

The helical transmembrane segment at 7–27 (YLSTAPVLATLWFGFLAGLLI) threads the bilayer.

It belongs to the PsaJ family.

The protein resides in the plastid. It is found in the chloroplast thylakoid membrane. Its function is as follows. May help in the organization of the PsaE and PsaF subunits. The polypeptide is Photosystem I reaction center subunit IX (Anthoceros angustus (Hornwort)).